We begin with the raw amino-acid sequence, 257 residues long: tRNA pseudouridine synthase A (257 aa).

Asp53 serves as the catalytic Nucleophile. Tyr111 provides a ligand contact to substrate.

The protein belongs to the tRNA pseudouridine synthase TruA family. In terms of assembly, homodimer.

It catalyses the reaction uridine(38/39/40) in tRNA = pseudouridine(38/39/40) in tRNA. Formation of pseudouridine at positions 38, 39 and 40 in the anticodon stem and loop of transfer RNAs. This Xanthomonas oryzae pv. oryzae (strain MAFF 311018) protein is tRNA pseudouridine synthase A.